The chain runs to 588 residues: Sentrin-specific protease 2 (588 aa).

The short motif at 28-31 is the Nuclear localization signal element; it reads KRRR. Ser-32 bears the Phosphoserine mark. The Nuclear localization signal signature appears at 47 to 52; the sequence is PAKRPR. The interval 157–184 is disordered; that stretch reads EGYNRRPSGRRHSKSNPESSLTWKPQEQ. Positions 172–184 are enriched in polar residues; it reads NPESSLTWKPQEQ. A Nuclear export signal motif is present at residues 316-331; the sequence is MEPDLSEEVSARLRLG. 2 positions are modified to phosphoserine: Ser-332 and Ser-343. Positions 394-558 are protease; sequence LRITRGDIQT…MFTCKYADYI (165 aa). Catalysis depends on residues His-477 and Asp-494. Catalysis depends on Cys-547, which acts as the Nucleophile.

This sequence belongs to the peptidase C48 family. Binds to SUMO2 and SUMO3. Interacts with the C-terminal domain of NUP153 via its N-terminus. Interacts with MTA1. Polyubiquitinated; which leads to proteasomal degradation. Highly expressed in testis. Detected in brain, heart and thymus.

It localises to the nucleus. The protein localises to the nuclear pore complex. Its subcellular location is the nucleus membrane. The protein resides in the cytoplasm. It is found in the cytoplasmic vesicle. It localises to the PML body. Its function is as follows. Protease that catalyzes two essential functions in the SUMO pathway. The first is the hydrolysis of an alpha-linked peptide bond at the C-terminal end of the small ubiquitin-like modifier (SUMO) propeptides, SUMO1, SUMO2 and SUMO3 leading to the mature form of the proteins. The second is the deconjugation of SUMO1, SUMO2 and SUMO3 from targeted proteins, by cleaving an epsilon-linked peptide bond between the C-terminal glycine of the mature SUMO and the lysine epsilon-amino group of the target protein. May down-regulate CTNNB1 levels and thereby modulate the Wnt pathway. Deconjugates SUMO2 from MTA1. Plays a dynamic role in adipogenesis by desumoylating and promoting the stabilization of CEBPB. Acts as a regulator of the cGAS-STING pathway by catalyzing desumoylation of CGAS and STING1 during the late phase of viral infection. Functionally, activates transcription. In Mus musculus (Mouse), this protein is Sentrin-specific protease 2 (Senp2).